The sequence spans 306 residues: Agmatinase (306 aa).

His126, Asp149, His151, Asp153, Asp230, and Asp232 together coordinate Mn(2+).

The protein belongs to the arginase family. Agmatinase subfamily. It depends on Mn(2+) as a cofactor.

It catalyses the reaction agmatine + H2O = urea + putrescine. It functions in the pathway amine and polyamine biosynthesis; putrescine biosynthesis via agmatine pathway; putrescine from agmatine: step 1/1. Catalyzes the formation of putrescine from agmatine. This Shigella sonnei (strain Ss046) protein is Agmatinase.